Reading from the N-terminus, the 91-residue chain is Large ribosomal subunit protein bL27 (91 aa).

The protein belongs to the bacterial ribosomal protein bL27 family.

The chain is Large ribosomal subunit protein bL27 from Chromobacterium violaceum (strain ATCC 12472 / DSM 30191 / JCM 1249 / CCUG 213 / NBRC 12614 / NCIMB 9131 / NCTC 9757 / MK).